The following is a 424-amino-acid chain: MAKALNGVRILDFTHVQSGPTCTQLLAWFGADVIKVERPGTGDITRGQLQDVPNADSLYFTMLNHNKRSITLDAKNPKGKEVLTALIKSCDVMVENFAPGVLDRMGFSWENIQKINPKLIVASIKGFGPGPFEDCKVYENVAQCTGGSASTTGFRDGLPLVTGAQIGDSGTGLHLALGIVTALFHRTHSGKGQRVTVAMQDSVLNLCRVKMRDQQRLAHGPLKEYSQFGEGIPFGDATPRAGNDSGGGQPGRILKCKGWETDPNAYIYFITQAAVWEKICDVIGEPTWKTDPNYAKPGARLPRLNEIFGRIEQWTMTKTKFEVMNICNPFDIPCGPILSMKEIAEDKSLYATGTLVEVDHPTRGKYISVGNPIKLSDSPADVRRSPLLGEHTDEILRDVLKFSESQVSDIRSSGALGEVPLAAE.

CoA is bound by residues 17–18, R38, 96–98, R104, and 136–139; these read QS, NFA, and KVYE. The Nucleophile role is filled by D168. 247-249 contacts substrate; that stretch reads GGQ.

This sequence belongs to the CoA-transferase III family. Frc subfamily. As to quaternary structure, homodimer.

It carries out the reaction formyl-CoA + oxalate = oxalyl-CoA + formate. It functions in the pathway metabolic intermediate degradation; oxalate degradation; CO(2) and formate from oxalate: step 1/2. Functionally, involved in the catabolism of oxalate and in the adapatation to low pH via the induction of the oxalate-dependent acid tolerance response (ATR). Catalyzes the transfer of the CoA moiety from formyl-CoA to oxalate. This chain is Formyl-CoA:oxalate CoA-transferase, found in Afipia carboxidovorans (strain ATCC 49405 / DSM 1227 / KCTC 32145 / OM5) (Oligotropha carboxidovorans).